Reading from the N-terminus, the 71-residue chain is Delta-actitoxin-Avd2b 4 (71 aa).

Residues 1 to 20 (MMNRLLVFLMLGAFMLVVSA) form the signal peptide. Positions 21–41 (NDAYGDEPAFKDLNQGDESLG) are excised as a propeptide. 3 disulfide bridges follow: cysteine 46–cysteine 61, cysteine 47–cysteine 55, and cysteine 49–cysteine 66.

It belongs to the sea anemone short toxin (type III) family.

Its subcellular location is the secreted. The protein resides in the nematocyst. Its function is as follows. Voltage-gated sodium channel (Nav) inhibitor. 1 uM completely inhibits insect voltage-gated sodium channel inactivation (DmNav1 from D.melanogaster). This is Delta-actitoxin-Avd2b 4 from Anemonia viridis (Snakelocks anemone).